The following is a 165-amino-acid chain: Protein OPG091 (165 aa).

This sequence belongs to the orthopoxvirus OPG091 family.

Its subcellular location is the virion. It is found in the host cytoplasm. In terms of biological role, contributes to vaccinia virus virulence in mice but not to replication in cell culture. In Vaccinia virus (strain Western Reserve) (VACV), this protein is Protein OPG091 (OPG091).